The chain runs to 501 residues: Probable Xaa-Pro aminopeptidase pepP (501 aa).

A disordered region spans residues 1–25 (MNYHSFLPLRRSSLSHSTTPPSKSR). Positions 12-25 (SSLSHSTTPPSKSR) are enriched in polar residues. Residues Asp-298, Asp-309, Glu-432, and Glu-472 each coordinate Mn(2+).

This sequence belongs to the peptidase M24B family. It depends on Mn(2+) as a cofactor.

The enzyme catalyses Release of any N-terminal amino acid, including proline, that is linked to proline, even from a dipeptide or tripeptide.. Its function is as follows. Catalyzes the removal of a penultimate prolyl residue from the N-termini of peptides. In Metarhizium acridum (strain CQMa 102), this protein is Probable Xaa-Pro aminopeptidase pepP (pepP).